The chain runs to 299 residues: Ribosomal protein L11 methyltransferase (299 aa).

Thr-152, Gly-172, Asp-194, and Asn-234 together coordinate S-adenosyl-L-methionine.

This sequence belongs to the methyltransferase superfamily. PrmA family.

The protein resides in the cytoplasm. It carries out the reaction L-lysyl-[protein] + 3 S-adenosyl-L-methionine = N(6),N(6),N(6)-trimethyl-L-lysyl-[protein] + 3 S-adenosyl-L-homocysteine + 3 H(+). Functionally, methylates ribosomal protein L11. In Geobacter metallireducens (strain ATCC 53774 / DSM 7210 / GS-15), this protein is Ribosomal protein L11 methyltransferase.